We begin with the raw amino-acid sequence, 360 residues long: Histidinol-phosphate aminotransferase (360 aa).

N6-(pyridoxal phosphate)lysine is present on lysine 211.

The protein belongs to the class-II pyridoxal-phosphate-dependent aminotransferase family. Histidinol-phosphate aminotransferase subfamily. In terms of assembly, homodimer. Pyridoxal 5'-phosphate is required as a cofactor.

It carries out the reaction L-histidinol phosphate + 2-oxoglutarate = 3-(imidazol-4-yl)-2-oxopropyl phosphate + L-glutamate. It participates in amino-acid biosynthesis; L-histidine biosynthesis; L-histidine from 5-phospho-alpha-D-ribose 1-diphosphate: step 7/9. This chain is Histidinol-phosphate aminotransferase, found in Cronobacter sakazakii (strain ATCC BAA-894) (Enterobacter sakazakii).